Here is a 558-residue protein sequence, read N- to C-terminus: Glypican-1 (558 aa).

An N-terminal signal peptide occupies residues 1-23 (MELRARGWWLLCAAAALVACARG). 7 cysteine pairs are disulfide-bonded: Cys32–Cys68, Cys62–Cys256, Cys69–Cys259, Cys191–Cys343, Cys246–Cys279, Cys268–Cys415, and Cys272–Cys401. N-linked (GlcNAc...) asparagine glycans are attached at residues Asn79 and Asn116. The disordered stretch occupies residues 341-374 (QGCGNPKVNPQGPGPEEKRRRGKLAPRERPPSGT). Basic and acidic residues predominate over residues 355–370 (PEEKRRRGKLAPRERP). Residues Ser486, Ser488, and Ser490 are each glycosylated (O-linked (Xyl...) (heparan sulfate) serine). The tract at residues 505 to 534 (RKSSSSRTPLTHALPGLSEQEGQKTSAASC) is disordered. A lipid anchor (GPI-anchor amidated serine) is attached at Ser530. The propeptide at 531–558 (AASCPQPPTFLLPLLLFLALTVARPRWR) is removed in mature form.

The protein belongs to the glypican family. Post-translationally, S-nitrosylated in a Cu(2+)-dependent manner. Nitric acid (NO) is released from the nitrosylated cysteines by ascorbate or by some other reducing agent, in a Cu(2+) or Zn(2+) dependent manner. This free nitric oxide is then capable of cleaving the heparan sulfate side chains. In terms of processing, N- and O-glycosylated. N-glycosylation is mainly of the complex type containing sialic acid. O-glycosylated with heparan sulfate. The heparan sulfate chains can be cleaved either by the action of heparanase or, degraded by a deaminative process that uses nitric oxide (NO) released from the S-nitrosylated cysteines. This process is triggered by ascorbate, or by some other reducing agent, in a Cu(2+)- or Zn(2+) dependent manner. Cu(2+) ions are provided by ceruloproteins such as APP, PRNP or CP which associate with GCP1 in intracellular compartments or lipid rafts. This cell-associated glypican is further processed to give rise to a medium-released species.

It localises to the cell membrane. The protein resides in the endosome. The protein localises to the secreted. Its subcellular location is the extracellular space. Functionally, cell surface proteoglycan that bears heparan sulfate. Binds, via the heparan sulfate side chains, alpha-4 (V) collagen and participates in Schwann cell myelination. May act as a catalyst in increasing the rate of conversion of prion protein PRPN(C) to PRNP(Sc) via associating (via the heparan sulfate side chains) with both forms of PRPN, targeting them to lipid rafts and facilitating their interaction. Required for proper skeletal muscle differentiation by sequestering FGF2 in lipid rafts preventing its binding to receptors (FGFRs) and inhibiting the FGF-mediated signaling. This chain is Glypican-1 (GPC1), found in Homo sapiens (Human).